Reading from the N-terminus, the 194-residue chain is Ribosomal RNA large subunit methyltransferase E (194 aa).

5 residues coordinate S-adenosyl-L-methionine: glycine 48, tryptophan 50, aspartate 66, asparagine 82, and aspartate 110. Residue lysine 150 is the Proton acceptor of the active site.

It belongs to the class I-like SAM-binding methyltransferase superfamily. RNA methyltransferase RlmE family.

It localises to the cytoplasm. The enzyme catalyses uridine(2552) in 23S rRNA + S-adenosyl-L-methionine = 2'-O-methyluridine(2552) in 23S rRNA + S-adenosyl-L-homocysteine + H(+). In terms of biological role, specifically methylates the uridine in position 2552 of 23S rRNA at the 2'-O position of the ribose in the fully assembled 50S ribosomal subunit. This is Ribosomal RNA large subunit methyltransferase E from Picrophilus torridus (strain ATCC 700027 / DSM 9790 / JCM 10055 / NBRC 100828 / KAW 2/3).